The chain runs to 901 residues: HTH-type transcriptional regulator MalT (901 aa).

39–46 (SPAGYGKT) contributes to the ATP binding site. Residues 829–894 (ELIRTSPLTQ…AAVQHAQKLL (66 aa)) enclose the HTH luxR-type domain. The segment at residues 853 to 872 (NEQIAGELEVAATTIKTHIR) is a DNA-binding region (H-T-H motif).

The protein belongs to the MalT family. As to quaternary structure, monomer in solution. Oligomerizes to an active state in the presence of the positive effectors ATP and maltotriose.

With respect to regulation, activated by ATP and maltotriose, which are both required for DNA binding. Functionally, positively regulates the transcription of the maltose regulon whose gene products are responsible for uptake and catabolism of malto-oligosaccharides. Specifically binds to the promoter region of its target genes, recognizing a short DNA motif called the MalT box. In Escherichia coli O6:K15:H31 (strain 536 / UPEC), this protein is HTH-type transcriptional regulator MalT.